The chain runs to 595 residues: DNA primase (595 aa).

The CHC2-type zinc finger occupies 38 to 62 (CPFHQEKTPSFTVSNSKRFFYCFGC). In terms of domain architecture, Toprim spans 250 to 332 (NHSILVEGYF…EKKISFIRLP (83 aa)). The Mg(2+) site is built by glutamate 256, aspartate 300, and aspartate 302.

It belongs to the DnaG primase family. In terms of assembly, monomer. Interacts with DnaB. Requires Zn(2+) as cofactor. Mg(2+) is required as a cofactor.

It carries out the reaction ssDNA + n NTP = ssDNA/pppN(pN)n-1 hybrid + (n-1) diphosphate.. RNA polymerase that catalyzes the synthesis of short RNA molecules used as primers for DNA polymerase during DNA replication. The sequence is that of DNA primase from Rickettsia conorii (strain ATCC VR-613 / Malish 7).